The following is a 928-amino-acid chain: Interphotoreceptor matrix proteoglycan 1 (928 aa).

Residues 1 to 20 (MHLKTGLIFLAICLALQVQG) form the signal peptide. Residues 26 to 50 (SKTNHGEAKQLADASGSDKTERTTK) form a disordered region. Over residues 29–49 (NHGEAKQLADASGSDKTERTT) the composition is skewed to basic and acidic residues. N143 carries an N-linked (GlcNAc...) asparagine glycan. Over residues 164 to 182 (QERKDEISTDKTGGKKLED) the composition is skewed to basic and acidic residues. The disordered stretch occupies residues 164-191 (QERKDEISTDKTGGKKLEDIPSVSTGPP). N-linked (GlcNAc...) asparagine glycosylation is found at N203 and N212. An SEA 1 domain is found at 231–356 (AEQMVEFSVT…TKLTVTDLQQ (126 aa)). Disordered regions lie at residues 441–481 (LSRE…TEDI) and 494–522 (ALVS…NDLI). Residues 466–477 (PSREPPHDRSPD) are compositionally biased toward basic and acidic residues. Residues 735 to 848 (KELVVFFSLR…YSLDIEPADQ (114 aa)) form the SEA 2 domain. 2 N-linked (GlcNAc...) asparagine glycosylation sites follow: N756 and N780. Residues 785–793 (KQLEILNFR) carry the Heparin- and hyaluronan-binding motif. N794 and N812 each carry an N-linked (GlcNAc...) asparagine glycan.

In terms of processing, highly glycosylated (N- and O-linked carbohydrates and sialic acid). Abundantly expressed in the retina (at protein level). Localizes to the photoreceptor layer of the interphotoreceptor matrix of the retina (at protein level).

Its subcellular location is the cell projection. It is found in the cilium. The protein resides in the photoreceptor outer segment. The protein localises to the secreted. It localises to the extracellular space. Its subcellular location is the extracellular matrix. It is found in the interphotoreceptor matrix. The protein resides in the photoreceptor inner segment. Chondroitin sulfate-, heparin- and hyaluronan-binding protein. May serve to form a basic macromolecular scaffold comprising the insoluble interphotoreceptor matrix. The sequence is that of Interphotoreceptor matrix proteoglycan 1 from Gallus gallus (Chicken).